Reading from the N-terminus, the 335-residue chain is Dolichyl-diphosphooligosaccharide--protein glycosyltransferase subunit MAGT1 (335 aa).

The first 29 residues, 1 to 29 (MAAGWWFWCVSVTVAVALLIVCDVPSVSA), serve as a signal peptide directing secretion. Residues 30–184 (QRKKEMVLSE…DVNIRVIRPP (155 aa)) lie on the Extracellular side of the membrane. The region spanning 47–175 (WTNKRPVIRM…IARWIADRTD (129 aa)) is the Thioredoxin domain. An N-linked (GlcNAc...) asparagine glycan is attached at Asn71. Cys87 and Cys90 are oxidised to a cystine. Residues 185–205 (NYAGPLMLGLLLAVIGGLVYL) traverse the membrane as a helical segment. At 206-209 (RRSN) the chain is on the cytoplasmic side. The helical transmembrane segment at 210 to 230 (MEFLFNKTGWAFAALCFVLAM) threads the bilayer. At 231 to 270 (TSGQMWNHIRGPPYAHKNPHTGHVNYIHGSSQAQFVAETH) the chain is on the extracellular side. Residues 271-291 (IVLLFNGGVTLGMVLLCEAAT) traverse the membrane as a helical segment. Topologically, residues 292 to 300 (SDMDIGKRK) are cytoplasmic. Residues 301–321 (IMCVAGIGLVVLFFSWMLSIF) form a helical membrane-spanning segment. The Extracellular portion of the chain corresponds to 322-335 (RSKYHGYPYSFLMS).

It belongs to the OST3/OST6 family. Accessory component of the STT3B-containing form of the oligosaccharyltransferase (OST) complex. OST exists in two different complex forms which contain common core subunits RPN1, RPN2, OST48, OST4, DAD1 and TMEM258, either STT3A or STT3B as catalytic subunits, and form-specific accessory subunits. OST can form stable complexes with the Sec61 complex or with both the Sec61 and TRAP complexes. The association of TUSC3 or MAGT1 with the STT3B-containing complex seems to be mutually exclusvice.

It localises to the cell membrane. The protein localises to the endoplasmic reticulum. The protein resides in the endoplasmic reticulum membrane. It participates in protein modification; protein glycosylation. Accessory component of the STT3B-containing form of the N-oligosaccharyl transferase (OST) complex which catalyzes the transfer of a high mannose oligosaccharide from a lipid-linked oligosaccharide donor to an asparagine residue within an Asn-X-Ser/Thr consensus motif in nascent polypeptide chains. Involved in N-glycosylation of STT3B-dependent substrates. Specifically required for the glycosylation of a subset of acceptor sites that are near cysteine residues; in this function seems to act redundantly with TUSC3. In its oxidized form proposed to form transient mixed disulfides with a glycoprotein substrate to facilitate access of STT3B to the unmodified acceptor site. Also has oxidoreductase-independent functions in the STT3B-containing OST complex possibly involving substrate recognition. Could indirectly play a role in Mg(2+) transport in epithelial cells. This Pongo abelii (Sumatran orangutan) protein is Dolichyl-diphosphooligosaccharide--protein glycosyltransferase subunit MAGT1.